The primary structure comprises 188 residues: Small ribosomal subunit protein eS8 (188 aa).

The tract at residues 1–34 (MGISRDSRHKRRLTGGRYPVHKKKRKYELGRPSS) is disordered. The span at 7-26 (SRHKRRLTGGRYPVHKKKRK) shows a compositional bias: basic residues.

Belongs to the eukaryotic ribosomal protein eS8 family.

This is Small ribosomal subunit protein eS8 (RPS8) from Theileria parva (East coast fever infection agent).